We begin with the raw amino-acid sequence, 345 residues long: Polyprenyl transferase dpmpC (345 aa).

8 helical membrane-spanning segments follow: residues 24 to 44, 60 to 80, 101 to 121, 183 to 203, 220 to 240, 261 to 281, 286 to 306, and 319 to 339; these read PVFASFAGLWSTLLAGAARLA, GLCFLAAYIFYGAGTVWNDWV, VTTFQAMLWMVLQTLATWYLL, LYVYPQYILGFIVAWPAVIGW, CLPLCSMVYFWIIYLNTAYSY, HLHLLLVALASPVPVCMLLFL, SFWLWATWLGGWTASFAEQLI, and LHKSNFMLGIWTIFACAVELL.

Belongs to the UbiA prenyltransferase family. Mg(2+) serves as cofactor.

It localises to the membrane. The protein operates within secondary metabolite biosynthesis; terpenoid biosynthesis. Polyprenyl transferase; part of the gene cluster that mediates the biosynthesis of diterpenoid pyrones. The first step of the pathway is the synthesis of the alpha-pyrone moiety by the polyketide synthase dpmpA via condensation of one acetyl-CoA starter unit with 3 malonyl-CoA units and 2 methylations. The alpha-pyrone is then combined with geranylgeranyl pyrophosphate (GGPP) formed by the GGPP synthase dpmpD through the action of the prenyltransferase dpmpC to yield a linear alpha-pyrone diterpenoid. Subsequent steps in the diterpenoid pyrone biosynthetic pathway involve the decalin core formation, which is initiated by the epoxidation of the C10-C11 olefin by the FAD-dependent oxidoreductase dpmpE, and is followed by a cyclization cascade catalyzed by the terpene cyclase dpmpB. The short chain dehydrogenase/reductase dpmpG then oxidizes the 8S hydroxy group to a ketone and the short chain dehydrogenase/reductase dpmpH reduces the ketone to the 8R hydroxy group to yield higginsianin B. Higginsianin B is further methylated by the methyltransferase dpmpI to produce the intermediate named FDDP B. The cytochrome P450 monooxygenase dpmpJ then oxidizes the C-26 methyl to primary alcohol, producing the final diterpenoid pyrone with a C-26 primary alcohol on the gamma-pyrone moiety named FDDP C. In Macrophomina phaseolina (strain MS6) (Charcoal rot fungus), this protein is Polyprenyl transferase dpmpC.